A 121-amino-acid polypeptide reads, in one-letter code: Chromosome transmission fidelity protein 8 homolog (121 aa).

It belongs to the CTF8 family. Component of the CTF18-RFC complex, which consists of CTF18, CTF8, DSCC1, RFC2, RFC3, RFC4 and RFC5. The CTF18-RFC complex does not interact with the Rad9/Rad1/Hus1 complex. The CTF18-RFC complex interacts with POLH. CTF18/CTF8/DSCC1 associate with PCNA. CTF8 exists as a dimer with DSCC1.

It is found in the nucleus. Its function is as follows. Chromosome cohesion factor involved in sister chromatid cohesion and fidelity of chromosome transmission. Component of one of the cell nuclear antigen loader complexes, CTF18-replication factor C (CTF18-RFC), which consists of CTF18, CTF8, DSCC1, RFC2, RFC3, RFC4 and RFC5. The CTF18-RFC complex binds to single-stranded and primed DNAs and has weak ATPase activity that is stimulated the presence of primed DNA, replication protein A (RPA) and proliferating cell nuclear antigen (PCNA). The CTF18-RFC complex catalyzes the ATP-dependent loading of PCNA onto primed and gapped DNA. It also interacts with and stimulates POLH, which is suggestive of a protein network that coordinates DNA repair, recombination and chromosome cohesion reactions with replication fork progression. The chain is Chromosome transmission fidelity protein 8 homolog from Rattus norvegicus (Rat).